The primary structure comprises 154 residues: Endoribonuclease YbeY (154 aa).

Zn(2+) contacts are provided by H113, H117, and H123.

Belongs to the endoribonuclease YbeY family. It depends on Zn(2+) as a cofactor.

The protein resides in the cytoplasm. In terms of biological role, single strand-specific metallo-endoribonuclease involved in late-stage 70S ribosome quality control and in maturation of the 3' terminus of the 16S rRNA. This chain is Endoribonuclease YbeY, found in Vibrio cholerae serotype O1 (strain ATCC 39315 / El Tor Inaba N16961).